A 190-amino-acid chain; its full sequence is Protein GrpE (190 aa).

Residues 1-42 (MNEKDNQTTSEPENEQEIIDVNDSGEQPEENETEQPQEEAVE) are disordered. The span at 26–42 (EQPEENETEQPQEEAVE) shows a compositional bias: acidic residues.

This sequence belongs to the GrpE family. In terms of assembly, homodimer.

The protein resides in the cytoplasm. Its function is as follows. Participates actively in the response to hyperosmotic and heat shock by preventing the aggregation of stress-denatured proteins, in association with DnaK and GrpE. It is the nucleotide exchange factor for DnaK and may function as a thermosensor. Unfolded proteins bind initially to DnaJ; upon interaction with the DnaJ-bound protein, DnaK hydrolyzes its bound ATP, resulting in the formation of a stable complex. GrpE releases ADP from DnaK; ATP binding to DnaK triggers the release of the substrate protein, thus completing the reaction cycle. Several rounds of ATP-dependent interactions between DnaJ, DnaK and GrpE are required for fully efficient folding. The protein is Protein GrpE of Oceanobacillus iheyensis (strain DSM 14371 / CIP 107618 / JCM 11309 / KCTC 3954 / HTE831).